A 458-amino-acid polypeptide reads, in one-letter code: Probable Xaa-Pro aminopeptidase pepP (458 aa).

Positions 254, 265, 388, and 428 each coordinate Mn(2+).

It belongs to the peptidase M24B family. The cofactor is Mn(2+).

It catalyses the reaction Release of any N-terminal amino acid, including proline, that is linked to proline, even from a dipeptide or tripeptide.. In terms of biological role, catalyzes the removal of a penultimate prolyl residue from the N-termini of peptides. In Botryotinia fuckeliana (strain B05.10) (Noble rot fungus), this protein is Probable Xaa-Pro aminopeptidase pepP (pepP).